The following is a 442-amino-acid chain: tRNA-2-methylthio-N(6)-dimethylallyladenosine synthase (442 aa).

The 118-residue stretch at 3–120 (KKLYIETHGC…LPEMIDAARV (118 aa)) folds into the MTTase N-terminal domain. The [4Fe-4S] cluster site is built by cysteine 12, cysteine 49, cysteine 83, cysteine 157, cysteine 161, and cysteine 164. The Radical SAM core domain maps to 143–375 (RVDGPSAYVS…QHRLNQQGFE (233 aa)). One can recognise a TRAM domain in the interval 378–442 (RQMVGSIQRI…PHSLRGSLLQ (65 aa)).

Belongs to the methylthiotransferase family. MiaB subfamily. In terms of assembly, monomer. Requires [4Fe-4S] cluster as cofactor.

The protein resides in the cytoplasm. The catalysed reaction is N(6)-dimethylallyladenosine(37) in tRNA + (sulfur carrier)-SH + AH2 + 2 S-adenosyl-L-methionine = 2-methylsulfanyl-N(6)-dimethylallyladenosine(37) in tRNA + (sulfur carrier)-H + 5'-deoxyadenosine + L-methionine + A + S-adenosyl-L-homocysteine + 2 H(+). In terms of biological role, catalyzes the methylthiolation of N6-(dimethylallyl)adenosine (i(6)A), leading to the formation of 2-methylthio-N6-(dimethylallyl)adenosine (ms(2)i(6)A) at position 37 in tRNAs that read codons beginning with uridine. The sequence is that of tRNA-2-methylthio-N(6)-dimethylallyladenosine synthase from Pseudomonas syringae pv. syringae (strain B728a).